Here is a 455-residue protein sequence, read N- to C-terminus: Homogentisate 1,2-dioxygenase (455 aa).

Catalysis depends on His-308, which acts as the Proton acceptor. Positions 351 and 357 each coordinate Fe cation. Residues Tyr-366 and His-387 each contribute to the homogentisate site. A Fe cation-binding site is contributed by His-387.

This sequence belongs to the homogentisate dioxygenase family. In terms of assembly, hexamer; dimer of trimers. The cofactor is Fe cation.

The catalysed reaction is homogentisate + O2 = 4-maleylacetoacetate + H(+). The protein operates within amino-acid degradation; L-phenylalanine degradation; acetoacetate and fumarate from L-phenylalanine: step 4/6. Its function is as follows. Involved in the catabolism of homogentisate (2,5-dihydroxyphenylacetate or 2,5-OH-PhAc), a central intermediate in the degradation of phenylalanine and tyrosine. Catalyzes the oxidative ring cleavage of the aromatic ring of homogentisate to yield maleylacetoacetate. The protein is Homogentisate 1,2-dioxygenase of Xanthomonas campestris pv. campestris (strain 8004).